Consider the following 578-residue polypeptide: Potassium-transporting ATPase potassium-binding subunit (578 aa).

10 helical membrane-spanning segments follow: residues 3-23, 65-85, 134-154, 175-195, 261-281, 293-313, 397-417, 435-455, 503-523, and 543-563; these read NAIL…IPLG, SFSV…LNLL, GLTV…FALI, IVLY…VSQG, FSNL…CFTF, AIFI…GVSE, GLYG…LMVG, AMLI…LASI, IGLI…AIAG, and LLFI…SFFP.

Belongs to the KdpA family. As to quaternary structure, the system is composed of three essential subunits: KdpA, KdpB and KdpC.

It localises to the cell membrane. Its function is as follows. Part of the high-affinity ATP-driven potassium transport (or Kdp) system, which catalyzes the hydrolysis of ATP coupled with the electrogenic transport of potassium into the cytoplasm. This subunit binds the extracellular potassium ions and delivers the ions to the membrane domain of KdpB through an intramembrane tunnel. This Clostridium perfringens (strain ATCC 13124 / DSM 756 / JCM 1290 / NCIMB 6125 / NCTC 8237 / Type A) protein is Potassium-transporting ATPase potassium-binding subunit.